The following is a 375-amino-acid chain: Chaperone protein DnaJ (375 aa).

In terms of domain architecture, J spans 5–70; sequence GYYEVLGVSK…QKRQAYDQFG (66 aa). The segment at 142-220 adopts a CR-type zinc-finger fold; the sequence is GKEYKIEIPR…CKGEGLTEKR (79 aa). 8 residues coordinate Zn(2+): C155, C158, C172, C175, C194, C197, C208, and C211. 4 CXXCXGXG motif repeats span residues 155-162, 172-179, 194-201, and 208-215; these read CVDCTGSG, CPDCSGTG, CPRCKGKG, and CKTCKGEG.

The protein belongs to the DnaJ family. As to quaternary structure, homodimer. Requires Zn(2+) as cofactor.

Its subcellular location is the cytoplasm. Functionally, participates actively in the response to hyperosmotic and heat shock by preventing the aggregation of stress-denatured proteins and by disaggregating proteins, also in an autonomous, DnaK-independent fashion. Unfolded proteins bind initially to DnaJ; upon interaction with the DnaJ-bound protein, DnaK hydrolyzes its bound ATP, resulting in the formation of a stable complex. GrpE releases ADP from DnaK; ATP binding to DnaK triggers the release of the substrate protein, thus completing the reaction cycle. Several rounds of ATP-dependent interactions between DnaJ, DnaK and GrpE are required for fully efficient folding. Also involved, together with DnaK and GrpE, in the DNA replication of plasmids through activation of initiation proteins. This Leptospira biflexa serovar Patoc (strain Patoc 1 / Ames) protein is Chaperone protein DnaJ.